The following is a 314-amino-acid chain: Methionyl-tRNA formyltransferase (314 aa).

(6S)-5,6,7,8-tetrahydrofolate is bound at residue 113 to 116 (SILP).

The protein belongs to the Fmt family.

The enzyme catalyses L-methionyl-tRNA(fMet) + (6R)-10-formyltetrahydrofolate = N-formyl-L-methionyl-tRNA(fMet) + (6S)-5,6,7,8-tetrahydrofolate + H(+). Its function is as follows. Attaches a formyl group to the free amino group of methionyl-tRNA(fMet). The formyl group appears to play a dual role in the initiator identity of N-formylmethionyl-tRNA by promoting its recognition by IF2 and preventing the misappropriation of this tRNA by the elongation apparatus. The protein is Methionyl-tRNA formyltransferase of Photobacterium profundum (strain SS9).